A 317-amino-acid polypeptide reads, in one-letter code: Lysosomal-associated transmembrane protein 4B (317 aa).

Positions 25-73 (AFGAKGTDPAEARSSRGIEEAGPRAHGRAGREPERRRSRQQRRGGLQAR) are disordered. Residues 32–59 (DPAEARSSRGIEEAGPRAHGRAGREPER) are compositionally biased toward basic and acidic residues. The next 4 helical transmembrane spans lie at 117-137 (ILLGVWYLIINAVVLLILLSA), 163-183 (MCIAIAISLLMILICAMATYG), 191-211 (WIIPFFCYQIFDFALNMLVAI), and 244-264 (CLVLIILLFISIILTFKGYLI). Residues 205-221 (LNMLVAITVLIYPNSIQ) form a required for NEDD4 interaction region.

Belongs to the LAPTM4/LAPTM5 transporter family. Homooligomer; upon reaching the lysosomes. Interacts with MCOLN1. Interacts with NEDD4; may play a role in the lysosomal sorting of LAPTM4B; enhances HGS association with NEDD4; mediates inhibition of EGFR degradation. Interacts with PIP5K1C; promotes SNX5 association with LAPTM4B; kinase activity of PIP5K1C is required; interaction is regulated by phosphatidylinositol 4,5-bisphosphate generated by PIP5K1C. Interacts with HGS; promotes HGS ubiquitination. Interacts with SNX5. Interacts with SLC3A2 and SLC7A5; recruits SLC3A2 and SLC7A5 to lysosomes to promote leucine uptake into these organelles and is required for mTORC1 activation. Interacts with LRRC32; decreases TGFB1 production in regulatory T cells. Interacts with BECN1; competes with EGFR for LAPTM4B binding; regulates EGFR activity. Interacts with EGFR; positively correlates with EGFR activation. In terms of processing, undergoes proteolytic cleavage following delivery to the lysosomes. Post-translationally, ubiquitinated by NEDD4.

It localises to the endomembrane system. The protein resides in the late endosome membrane. Its subcellular location is the cell membrane. It is found in the cell projection. The protein localises to the lysosome membrane. It localises to the endosome membrane. The protein resides in the endosome. Its subcellular location is the multivesicular body membrane. It is found in the multivesicular body lumen. In terms of biological role, required for optimal lysosomal function. Blocks EGF-stimulated EGFR intraluminal sorting and degradation. Conversely by binding with the phosphatidylinositol 4,5-bisphosphate, regulates its PIP5K1C interaction, inhibits HGS ubiquitination and relieves LAPTM4B inhibition of EGFR degradation. Recruits SLC3A2 and SLC7A5 (the Leu transporter) to the lysosome, promoting entry of leucine and other essential amino acid (EAA) into the lysosome, stimulating activation of proton-transporting vacuolar (V)-ATPase protein pump (V-ATPase) and hence mTORC1 activation. Plays a role as negative regulator of TGFB1 production in regulatory T cells. Binds ceramide and facilitates its exit from late endosome in order to control cell death pathways. In Homo sapiens (Human), this protein is Lysosomal-associated transmembrane protein 4B.